We begin with the raw amino-acid sequence, 216 residues long: Refilin-B (216 aa).

A disordered region spans residues 1-52 (MVGRLSLQDVPELVDTKKKGDGVLDSPDSGLPPSPSPSHWGLAAATGGGGER). Phosphoserine is present on residues S6 and S26.

It belongs to the Refilin family. Interacts with FLNA and FLNB.

The protein resides in the cytoplasm. Its subcellular location is the cytoskeleton. Its function is as follows. Involved in the regulation of the perinuclear actin network and nuclear shape through interaction with filamins. Plays an essential role in the formation of cartilaginous skeletal elements. The polypeptide is Refilin-B (Rattus norvegicus (Rat)).